We begin with the raw amino-acid sequence, 446 residues long: MQFTHLVALALALATSEAAHQGFNYGNTKSDGSAKSQADFQAEFSTAKNLVGTSGFTSARLYTMIQGGTANTPISAIPAAITEQTSLLLGLWASGGNFANEIAALKAAIAQYGDDLAKLVVGISVGSEDLYRNSVDGVKANAGIGTNPDEIVSYINEVRSTIAGTKLSGAPIGHVDTWTAWVNGSNSAVIDACDWLGFDGYPYFQNTMANSISDAKALFDESVAKTQAVAKGKEVWITETGWPVSGKTENLAVANLANAKTYWDEVGCPLFGKTNTWWYILQDADPVTPNPSFGIVGSTLSTTPLFDLSCSASSSSSAAAAASSTAGPSASSVIGGKASGFTTAAANSAKPTFTVGKGPGGSYNGTGFWNSTSSARPSSSAISGSSSGSAAGSSGAGASGASGQSSSSTGSSSAPSTSNILSNAASGLSGSIFGAVVAVCLALAAL.

The N-terminal stretch at 1-18 (MQFTHLVALALALATSEA) is a signal peptide. Residue glutamate 128 is the Proton donor of the active site. A glycan (N-linked (GlcNAc...) asparagine) is linked at asparagine 183. Catalysis depends on glutamate 239, which acts as the Nucleophile. Residues asparagine 364 and asparagine 370 are each glycosylated (N-linked (GlcNAc...) asparagine). The segment at 393 to 416 (SSGAGASGASGQSSSSTGSSSAPS) is disordered. The span at 401 to 416 (ASGQSSSSTGSSSAPS) shows a compositional bias: low complexity. Asparagine 423 is lipidated: GPI-anchor amidated asparagine. The propeptide at 424–446 (AASGLSGSIFGAVVAVCLALAAL) is removed in mature form.

This sequence belongs to the glycosyl hydrolase 17 family. In terms of processing, the GPI-anchor is attached to the protein in the endoplasmic reticulum and serves to target the protein to the cell surface. There, the glucosamine-inositol phospholipid moiety is cleaved off and the GPI-modified mannoprotein is covalently attached via its lipidless GPI glycan remnant to the 1,6-beta-glucan of the outer cell wall layer.

The protein resides in the cell membrane. Its subcellular location is the secreted. It localises to the cell wall. It carries out the reaction Hydrolysis of (1-&gt;3)-beta-D-glucosidic linkages in (1-&gt;3)-beta-D-glucans.. Functionally, glucanases play a role in cell expansion during growth, in cell-cell fusion during mating, and in spore release during sporulation. This enzyme may be involved in beta-glucan degradation and also function biosynthetically as a transglycosylase. The chain is Probable glucan endo-1,3-beta-glucosidase eglC (eglC) from Aspergillus fumigatus (strain ATCC MYA-4609 / CBS 101355 / FGSC A1100 / Af293) (Neosartorya fumigata).